Reading from the N-terminus, the 177-residue chain is Large ribosomal subunit protein uL6 (177 aa).

It belongs to the universal ribosomal protein uL6 family. In terms of assembly, part of the 50S ribosomal subunit.

In terms of biological role, this protein binds to the 23S rRNA, and is important in its secondary structure. It is located near the subunit interface in the base of the L7/L12 stalk, and near the tRNA binding site of the peptidyltransferase center. This is Large ribosomal subunit protein uL6 from Vibrio parahaemolyticus serotype O3:K6 (strain RIMD 2210633).